Consider the following 51-residue polypeptide: Sperm protamine P1 (51 aa).

The protein belongs to the protamine P1 family. As to expression, testis.

Its subcellular location is the nucleus. The protein localises to the chromosome. Functionally, protamines substitute for histones in the chromatin of sperm during the haploid phase of spermatogenesis. They compact sperm DNA into a highly condensed, stable and inactive complex. The chain is Sperm protamine P1 (PRM1) from Piliocolobus badius (Western red colobus).